The chain runs to 414 residues: Clusterin-associated protein 1 (414 aa).

The stretch at 198-291 (KTKDLLNNVA…ERFEEAKNTL (94 aa)) forms a coiled coil. Residues 305 to 414 (LLKSGSNDDS…EPLDESDNDF (110 aa)) are disordered. 2 stretches are compositionally biased toward acidic residues: residues 312 to 328 (DDSD…DSEL) and 360 to 389 (DSDD…EDES). Phosphoserine occurs at positions 314, 324, and 326. At Ser-410 the chain carries Phosphoserine.

Belongs to the CLUAP1 family. In terms of assembly, interacts with CLU/clusterin. Interacts with UBXN10; the interaction is direct.

It localises to the cell projection. The protein resides in the cilium. Its subcellular location is the nucleus. Required for cilia biogenesis. Appears to function within the multiple intraflagellar transport complex B (IFT-B). Key regulator of hedgehog signaling. The polypeptide is Clusterin-associated protein 1 (CLUAP1) (Macaca fascicularis (Crab-eating macaque)).